The chain runs to 198 residues: Small ribosomal subunit protein uS2 (198 aa).

It belongs to the universal ribosomal protein uS2 family.

The protein is Small ribosomal subunit protein uS2 of Methanobrevibacter smithii (strain ATCC 35061 / DSM 861 / OCM 144 / PS).